A 200-amino-acid polypeptide reads, in one-letter code: TATA-box-binding protein (200 aa).

Repeat copies occupy residues 25–101 (LQNI…ARII) and 115–192 (IQNI…YPVL).

Belongs to the TBP family. As to quaternary structure, belongs to the TFIID complex together with the TBP-associated factors (TAFs). Binds DNA as monomer.

The protein resides in the nucleus. In terms of biological role, general transcription factor that functions at the core of the DNA-binding multiprotein factor TFIID. Binding of TFIID to the TATA box is the initial transcriptional step of the pre-initiation complex (PIC), playing a role in the activation of eukaryotic genes transcribed by RNA polymerase II. The protein is TATA-box-binding protein of Nicotiana tabacum (Common tobacco).